Reading from the N-terminus, the 266-residue chain is Dihydropteroate synthase (266 aa).

The 249-residue stretch at 12-260 (AAIMGILNVT…DVKANQDIVA (249 aa)) folds into the Pterin-binding domain. A Mg(2+)-binding site is contributed by Asn19. Residues Thr59, Asp93, Asn112, Asp176, Lys212, and 248 to 250 (RVH) contribute to the (7,8-dihydropterin-6-yl)methyl diphosphate site.

Belongs to the DHPS family. As to quaternary structure, homodimer or homotrimer. Mg(2+) serves as cofactor.

It carries out the reaction (7,8-dihydropterin-6-yl)methyl diphosphate + 4-aminobenzoate = 7,8-dihydropteroate + diphosphate. Its pathway is cofactor biosynthesis; tetrahydrofolate biosynthesis; 7,8-dihydrofolate from 2-amino-4-hydroxy-6-hydroxymethyl-7,8-dihydropteridine diphosphate and 4-aminobenzoate: step 1/2. In terms of biological role, catalyzes the condensation of para-aminobenzoate (pABA) with 6-hydroxymethyl-7,8-dihydropterin diphosphate (DHPt-PP) to form 7,8-dihydropteroate (H2Pte), the immediate precursor of folate derivatives. This chain is Dihydropteroate synthase (folP), found in Streptococcus pyogenes serotype M3 (strain ATCC BAA-595 / MGAS315).